We begin with the raw amino-acid sequence, 538 residues long: NADH-quinone oxidoreductase subunit N (538 aa).

A run of 14 helical transmembrane segments spans residues isoleucine 12 to leucine 32, leucine 47 to serine 67, proline 81 to alanine 101, glycine 144 to phenylalanine 164, leucine 170 to leucine 190, tyrosine 205 to glycine 225, phenylalanine 248 to proline 268, isoleucine 294 to aspartate 314, proline 317 to glutamine 337, methionine 343 to asparagine 363, leucine 371 to valine 391, alanine 423 to threonine 443, serine 472 to valine 492, and glycine 502 to alanine 522.

This sequence belongs to the complex I subunit 2 family. NDH-1 is composed of 14 different subunits. Subunits NuoA, H, J, K, L, M, N constitute the membrane sector of the complex.

It localises to the cell membrane. It carries out the reaction a quinone + NADH + 5 H(+)(in) = a quinol + NAD(+) + 4 H(+)(out). Its function is as follows. NDH-1 shuttles electrons from NADH, via FMN and iron-sulfur (Fe-S) centers, to quinones in the respiratory chain. The immediate electron acceptor for the enzyme in this species is believed to be a menaquinone. Couples the redox reaction to proton translocation (for every two electrons transferred, four hydrogen ions are translocated across the cytoplasmic membrane), and thus conserves the redox energy in a proton gradient. In Mycobacteroides abscessus (strain ATCC 19977 / DSM 44196 / CCUG 20993 / CIP 104536 / JCM 13569 / NCTC 13031 / TMC 1543 / L948) (Mycobacterium abscessus), this protein is NADH-quinone oxidoreductase subunit N.